Reading from the N-terminus, the 294-residue chain is 4-hydroxy-tetrahydrodipicolinate synthase (294 aa).

Thr45 contributes to the pyruvate binding site. The Proton donor/acceptor role is filled by Tyr133. The active-site Schiff-base intermediate with substrate is Lys161. Ile203 provides a ligand contact to pyruvate.

The protein belongs to the DapA family. Homotetramer; dimer of dimers.

It localises to the cytoplasm. It carries out the reaction L-aspartate 4-semialdehyde + pyruvate = (2S,4S)-4-hydroxy-2,3,4,5-tetrahydrodipicolinate + H2O + H(+). The protein operates within amino-acid biosynthesis; L-lysine biosynthesis via DAP pathway; (S)-tetrahydrodipicolinate from L-aspartate: step 3/4. In terms of biological role, catalyzes the condensation of (S)-aspartate-beta-semialdehyde [(S)-ASA] and pyruvate to 4-hydroxy-tetrahydrodipicolinate (HTPA). This Buchnera aphidicola subsp. Acyrthosiphon pisum (strain APS) (Acyrthosiphon pisum symbiotic bacterium) protein is 4-hydroxy-tetrahydrodipicolinate synthase.